Here is a 152-residue protein sequence, read N- to C-terminus: Deoxyuridine 5'-triphosphate nucleotidohydrolase (152 aa).

Substrate is bound by residues 71 to 73 (RSG), N84, 88 to 90 (LID), and M98.

It belongs to the dUTPase family. Mg(2+) serves as cofactor.

The catalysed reaction is dUTP + H2O = dUMP + diphosphate + H(+). It functions in the pathway pyrimidine metabolism; dUMP biosynthesis; dUMP from dCTP (dUTP route): step 2/2. This enzyme is involved in nucleotide metabolism: it produces dUMP, the immediate precursor of thymidine nucleotides and it decreases the intracellular concentration of dUTP so that uracil cannot be incorporated into DNA. The polypeptide is Deoxyuridine 5'-triphosphate nucleotidohydrolase (Coxiella burnetii (strain Dugway 5J108-111)).